The primary structure comprises 95 residues: RING finger protein Z (95 aa).

Polar residues predominate over residues 1–17 (MGNCNRTQKPSSSSNNL). Residues 1–25 (MGNCNRTQKPSSSSNNLEKPPQAAE) form a disordered region. G2 carries the N-myristoyl glycine; by host lipid modification. An RING-type; atypical zinc finger spans residues 40 to 76 (CKCCWFADKNLITCSDHYLCLRCHQIMLRNSELCNIC). Positions 90 to 93 (ASAP) match the ASAP motif motif.

The protein belongs to the arenaviridae Z protein family. As to quaternary structure, interacts with protein NP; this interaction probably directs the encapsidated genome to budding sites. Interacts (via RING domain) with polymerase L; this interaction inhibits viral transcription and replication, Z partially blocks the product exit tunnel for the releasing nascent RNA product. Interacts with the glycoprotein complex; this interaction plays a role in virion budding. Interacts with host eIF4E; this interaction results in eIF4E reduced affinity for its substrate, the 5'-m7 G cap structure. Interacts (via late-budding domain) with host TSG101; this interaction is essential for budding and release of viral particles. Interacts with host RPLP0; this interaction may serve to load ribosome-like particles inside the virion. Interacts with host PML; this interaction induces PML bodies redistribution in the cytoplasm upon viral infection. Myristoylation is required for the role of RING finger protein Z in assembly and budding.

The protein resides in the virion. The protein localises to the host cytoplasm. Its subcellular location is the host perinuclear region. It localises to the host cell membrane. Plays a crucial role in virion assembly and budding. Expressed late in the virus life cycle, it acts as an inhibitor of viral transcription and RNA synthesis by interacting with the viral polymerase L. Presumably recruits the NP encapsidated genome to cellular membranes at budding sites via direct interaction with NP. Plays critical roles in the final steps of viral release by interacting with host TSG101, a member of the vacuolar protein-sorting pathway and using other cellular host proteins involved in vesicle formation pathway. The budding of the virus progeny occurs after association of protein Z with the viral glycoprotein complex SSP-GP1-GP2 at the cell periphery, step that requires myristoylation of protein Z. Also selectively represses protein production by associating with host eIF4E. In cell-based minigenome assay, has an inhibitory effect on the ribonucleoprotein machinery (vRNP), which is responsible for the replication and transcription of the viral genome. This chain is RING finger protein Z, found in Tacaribe virus (strain Franze-Fernandez) (TCRV).